The chain runs to 66 residues: Prokaryotic ubiquitin-like protein Pup (66 aa).

Residues 1 to 10 (MAGQEQQSSS) are compositionally biased toward low complexity. The tract at residues 1–39 (MAGQEQQSSSPREEEHEVADAPVPVPSSPQASAHTDGVD) is disordered. The segment at 23–60 (VPVPSSPQASAHTDGVDDLLDEIDGVLESNAEEFVRGF) is ARC ATPase binding. Q66 carries the deamidated glutamine modification. Residue Q66 forms an Isoglutamyl lysine isopeptide (Gln-Lys) (interchain with K-? in acceptor proteins) linkage.

The protein belongs to the prokaryotic ubiquitin-like protein family. In terms of assembly, strongly interacts with the proteasome-associated ATPase ARC through a hydrophobic interface; the interacting region of Pup lies in its C-terminal half. There is one Pup binding site per ARC hexamer ring. Post-translationally, is modified by deamidation of its C-terminal glutamine to glutamate by the deamidase Dop, a prerequisite to the subsequent pupylation process.

It participates in protein degradation; proteasomal Pup-dependent pathway. Protein modifier that is covalently attached to lysine residues of substrate proteins, thereby targeting them for proteasomal degradation. The tagging system is termed pupylation. The sequence is that of Prokaryotic ubiquitin-like protein Pup from Renibacterium salmoninarum (strain ATCC 33209 / DSM 20767 / JCM 11484 / NBRC 15589 / NCIMB 2235).